We begin with the raw amino-acid sequence, 277 residues long: Transmembrane protein 53 (277 aa).

The helical transmembrane segment at 171 to 191 (LLLLVAFALVVVLFHVLLAPI) threads the bilayer.

It belongs to the TMEM53 family. Widely expressed.

The protein resides in the nucleus outer membrane. Its function is as follows. Ensures normal bone formation, through the negative regulation of bone morphogenetic protein (BMP) signaling in osteoblast lineage cells by blocking cytoplasm-nucleus translocation of phosphorylated SMAD1/5/9 proteins. The protein is Transmembrane protein 53 (TMEM53) of Homo sapiens (Human).